We begin with the raw amino-acid sequence, 156 residues long: E3 ubiquitin-protein ligase RNF181 (156 aa).

An RING-type; atypical zinc finger spans residues 79 to 120; it reads CPVCLLEFEEQESVREMPCKHLFHTGCILPWLNKTNSCPLCR. Positions 135–156 are disordered; it reads KDKERRRQREHRLEDLHGAMYT.

It belongs to the RNF181 family.

The catalysed reaction is S-ubiquitinyl-[E2 ubiquitin-conjugating enzyme]-L-cysteine + [acceptor protein]-L-lysine = [E2 ubiquitin-conjugating enzyme]-L-cysteine + N(6)-ubiquitinyl-[acceptor protein]-L-lysine.. Its pathway is protein modification; protein ubiquitination. E3 ubiquitin-protein ligase which accepts ubiquitin from an E2 ubiquitin-conjugating enzyme in the form of a thioester and then directly transfers the ubiquitin to targeted substrates. Catalyzes monoubiquitination of 26S proteasome subunit PSMC2/RPT1. In Danio rerio (Zebrafish), this protein is E3 ubiquitin-protein ligase RNF181 (rnf181).